Consider the following 535-residue polypeptide: EH domain-containing protein 3 (535 aa).

The residue at position 1 (Met1) is an N-acetylmethionine. One can recognise a Dynamin-type G domain in the interval 55–286; it reads FDNKPMVLLV…DLFRDIQSLP (232 aa). Positions 65–72 are G1 motif; it reads GQYSTGKT. ATP is bound at residue 65 to 72; sequence GQYSTGKT. The tract at residues 91–92 is G2 motif; sequence EP. The G3 motif stretch occupies residues 153 to 156; the sequence is DTPG. A coiled-coil region spans residues 198 to 227; the sequence is DEFSEVIKALKNHEDKMRVVLNKADQIETQ. Residues 219-222 form a G4 motif region; the sequence is NKAD. Lys220 contributes to the ATP binding site. A region of interest (G5 motif) is located at residue Ile243. Trp258 is a binding site for ATP. Lys315 participates in a covalent cross-link: Glycyl lysine isopeptide (Lys-Gly) (interchain with G-Cter in SUMO). Phosphoserine occurs at positions 349 and 456. Residues 444 to 532 form the EH domain; it reads DKPMYDEIFY…AHLLPPSKRK (89 aa). The EF-hand domain maps to 476 to 511; the sequence is LPNSVLGKIWKLADIDKDGMLDDDEFALANHLIKVK. 5 residues coordinate Ca(2+): Asp489, Asp491, Asp493, Met495, and Glu500. A Glycyl lysine isopeptide (Lys-Gly) (interchain with G-Cter in SUMO) cross-link involves residue Lys511.

The protein belongs to the TRAFAC class dynamin-like GTPase superfamily. Dynamin/Fzo/YdjA family. EHD subfamily. As to quaternary structure, homooligomer, and heterooligomer with EHD1, EHD2 and EHD4, ATP-binding is required for heterooligomerization. Interacts with PACSIN1. Interacts with PACSIN2. Interacts (via EH domain) with MICALL1. Interacts (via EH domain) with RAB11FIP2. Interacts with ANK2. Highly expressed in heart and brain and moderately expressed in kidney, liver, and placenta.

It localises to the recycling endosome membrane. Its subcellular location is the cell membrane. The protein resides in the cell projection. The protein localises to the cilium membrane. ATP- and membrane-binding protein that controls membrane reorganization/tubulation upon ATP hydrolysis. In vitro causes tubulation of endocytic membranes. Binding to phosphatidic acid induces its membrane tubulation activity. Plays a role in endocytic transport. Involved in early endosome to recycling endosome compartment (ERC), retrograde early endosome to Golgi, and endosome to plasma membrane (rapid recycling) protein transport. Involved in the regulation of Golgi maintenance and morphology. Involved in the recycling of internalized D1 dopamine receptor. Plays a role in cardiac protein trafficking probably implicating ANK2. Involved in the ventricular membrane targeting of SLC8A1 and CACNA1C and probably the atrial membrane localization of CACNA1GG and CACNA1H implicated in the regulation of atrial myocyte excitability and cardiac conduction. In conjunction with EHD4 may be involved in endocytic trafficking of KDR/VEGFR2 implicated in control of glomerular function. Involved in the rapid recycling of integrin beta-3 implicated in cell adhesion maintenance. Involved in the unidirectional retrograde dendritic transport of endocytosed BACE1 and in efficient sorting of BACE1 to axons implicating a function in neuronal APP processing. Plays a role in the formation of the ciliary vesicle, an early step in cilium biogenesis; possibly sharing redundant functions with EHD1. The polypeptide is EH domain-containing protein 3 (Homo sapiens (Human)).